A 364-amino-acid polypeptide reads, in one-letter code: Aminomethyltransferase (364 aa).

It belongs to the GcvT family. The glycine cleavage system is composed of four proteins: P, T, L and H.

It catalyses the reaction N(6)-[(R)-S(8)-aminomethyldihydrolipoyl]-L-lysyl-[protein] + (6S)-5,6,7,8-tetrahydrofolate = N(6)-[(R)-dihydrolipoyl]-L-lysyl-[protein] + (6R)-5,10-methylene-5,6,7,8-tetrahydrofolate + NH4(+). In terms of biological role, the glycine cleavage system catalyzes the degradation of glycine. This Shewanella putrefaciens (strain CN-32 / ATCC BAA-453) protein is Aminomethyltransferase.